The primary structure comprises 341 residues: Putative NADPH-dependent methylglyoxal reductase GRP2 (341 aa).

Residues K40 and Y171 each coordinate NADP(+).

This sequence belongs to the NAD(P)-dependent epimerase/dehydratase family. Dihydroflavonol-4-reductase subfamily.

The protein localises to the cytoplasm. The catalysed reaction is (S)-lactaldehyde + NADP(+) = methylglyoxal + NADPH + H(+). Functionally, catalyzes the irreversible reduction of the cytotoxic compound methylglyoxal (MG, 2-oxopropanal) to (S)-lactaldehyde. MG is synthesized via a bypath of glycolysis from dihydroxyacetone phosphate and is believed to play a role in cell cycle regulation and stress adaptation. This is Putative NADPH-dependent methylglyoxal reductase GRP2 (GRP2) from Candida albicans (strain SC5314 / ATCC MYA-2876) (Yeast).